The primary structure comprises 145 residues: UPF0735 ACT domain-containing protein CLL_A2896 (145 aa).

The ACT domain maps to 69 to 144; that stretch reads TFNLIVKDQT…YVEKIEFVAM (76 aa).

The protein belongs to the UPF0735 family.

In Clostridium botulinum (strain Eklund 17B / Type B), this protein is UPF0735 ACT domain-containing protein CLL_A2896.